The following is a 178-amino-acid chain: MNKMDRQRIETVGKLGSTYGIRGWLRIYSSTENAESIFDYQPWFLKIKDQWQAIELETWKHHNHELIVKLKNINDRETAQTLANVEIGVDLSVFPALEEGDFYWHDLIGCQVVNLQGYAMGTVSEMMETGSNDVLVVRANAKDAFGKQERLIPFLYEQVVKRVDLTTKTIEVDWDAGF.

The PRC barrel domain occupies Glu-99–Phe-178.

Belongs to the RimM family. Binds ribosomal protein uS19.

The protein resides in the cytoplasm. Functionally, an accessory protein needed during the final step in the assembly of 30S ribosomal subunit, possibly for assembly of the head region. Essential for efficient processing of 16S rRNA. May be needed both before and after RbfA during the maturation of 16S rRNA. It has affinity for free ribosomal 30S subunits but not for 70S ribosomes. The chain is Ribosome maturation factor RimM from Mannheimia succiniciproducens (strain KCTC 0769BP / MBEL55E).